A 123-amino-acid chain; its full sequence is Methylmalonyl-CoA carboxyltransferase 1.3S subunit (123 aa).

The Biotinyl-binding domain maps to 46-123; that stretch reads GAGAGKAGEG…QGGQGLIKIG (78 aa). Lys89 carries the N6-biotinyllysine modification.

As to quaternary structure, transcarboxylase is composed of three subunits: 1.3S, 5S, and 12S. The core of the enzyme is composed of six 12S subunits. On each side of the core there are three pairs of 5S subunits. Each 5S dimer is attached to the core by two 1.3S subunits. Thus the total number of chains is 30 (6 + 12 + 12).

The catalysed reaction is (S)-methylmalonyl-CoA + pyruvate = propanoyl-CoA + oxaloacetate. Its function is as follows. The biotinyl 1.3S subunit serves as a carboxyl carrier between the substrate-binding sites on the 12S and 5S subunits. This Propionibacterium freudenreichii subsp. shermanii protein is Methylmalonyl-CoA carboxyltransferase 1.3S subunit.